The primary structure comprises 237 residues: Carboxy-S-adenosyl-L-methionine synthase (237 aa).

Residues Y40, 65–67, 116–117, N131, and R194 contribute to the S-adenosyl-L-methionine site; these read GCS and DI.

Belongs to the class I-like SAM-binding methyltransferase superfamily. Cx-SAM synthase family. In terms of assembly, homodimer.

The enzyme catalyses prephenate + S-adenosyl-L-methionine = carboxy-S-adenosyl-L-methionine + 3-phenylpyruvate + H2O. Its function is as follows. Catalyzes the conversion of S-adenosyl-L-methionine (SAM) to carboxy-S-adenosyl-L-methionine (Cx-SAM). The chain is Carboxy-S-adenosyl-L-methionine synthase from Dichelobacter nodosus (strain VCS1703A).